Reading from the N-terminus, the 122-residue chain is Large ribosomal subunit protein uL14 (122 aa).

Belongs to the universal ribosomal protein uL14 family. Part of the 50S ribosomal subunit. Forms a cluster with proteins L3 and L19. In the 70S ribosome, L14 and L19 interact and together make contacts with the 16S rRNA in bridges B5 and B8.

Its function is as follows. Binds to 23S rRNA. Forms part of two intersubunit bridges in the 70S ribosome. The polypeptide is Large ribosomal subunit protein uL14 (Flavobacterium johnsoniae (strain ATCC 17061 / DSM 2064 / JCM 8514 / BCRC 14874 / CCUG 350202 / NBRC 14942 / NCIMB 11054 / UW101) (Cytophaga johnsonae)).